Here is a 437-residue protein sequence, read N- to C-terminus: Adenylosuccinate synthetase (437 aa).

GTP is bound by residues 12-18 and 40-42; these read GDEGKGK and GHT. Asp13 functions as the Proton acceptor in the catalytic mechanism. Mg(2+)-binding residues include Asp13 and Gly40. IMP-binding positions include 13 to 16, 38 to 41, Thr128, Arg142, Gln223, Thr238, and Arg302; these read DEGK and NAGH. His41 functions as the Proton donor in the catalytic mechanism. A substrate-binding site is contributed by 298-304; sequence TTTGRRR. GTP-binding positions include Arg304, 330–332, and 412–414; these read KLD and SLG.

The protein belongs to the adenylosuccinate synthetase family. As to quaternary structure, homodimer. The cofactor is Mg(2+).

The protein resides in the cytoplasm. It catalyses the reaction IMP + L-aspartate + GTP = N(6)-(1,2-dicarboxyethyl)-AMP + GDP + phosphate + 2 H(+). It participates in purine metabolism; AMP biosynthesis via de novo pathway; AMP from IMP: step 1/2. In terms of biological role, plays an important role in the de novo pathway of purine nucleotide biosynthesis. Catalyzes the first committed step in the biosynthesis of AMP from IMP. This is Adenylosuccinate synthetase from Prochlorococcus marinus (strain NATL1A).